We begin with the raw amino-acid sequence, 426 residues long: 3-phosphoshikimate 1-carboxyvinyltransferase (426 aa).

K22, S23, and R27 together coordinate 3-phosphoshikimate. K22 provides a ligand contact to phosphoenolpyruvate. Positions 96 and 124 each coordinate phosphoenolpyruvate. Residues S170 and S171 each contribute to the 3-phosphoshikimate site. Position 172 (Q172) interacts with phosphoenolpyruvate. S198, D314, N337, and K341 together coordinate 3-phosphoshikimate. The active-site Proton acceptor is the D314. R345, R387, and K412 together coordinate phosphoenolpyruvate.

Belongs to the EPSP synthase family. Homotetramer.

The protein resides in the cytoplasm. It carries out the reaction 3-phosphoshikimate + phosphoenolpyruvate = 5-O-(1-carboxyvinyl)-3-phosphoshikimate + phosphate. Its pathway is metabolic intermediate biosynthesis; chorismate biosynthesis; chorismate from D-erythrose 4-phosphate and phosphoenolpyruvate: step 6/7. Catalyzes the transfer of the enolpyruvyl moiety of phosphoenolpyruvate (PEP) to the 5-hydroxyl of shikimate-3-phosphate (S3P) to produce enolpyruvyl shikimate-3-phosphate and inorganic phosphate. This Vibrio cholerae serotype O1 (strain ATCC 39315 / El Tor Inaba N16961) protein is 3-phosphoshikimate 1-carboxyvinyltransferase.